We begin with the raw amino-acid sequence, 99 residues long: uncharacterized protein (99 aa).

Residues 1–17 (MMMNAFFPAMALIVLVG) form the signal peptide. Cys-18 carries the N-palmitoyl cysteine lipid modification. The S-diacylglycerol cysteine moiety is linked to residue Cys-18.

It is found in the cell membrane. This is an uncharacterized protein from Escherichia coli (strain UTI89 / UPEC).